The sequence spans 126 residues: Protein C10 (126 aa).

At Ala-2 the chain carries N-acetylalanine.

The protein belongs to the UPF0456 family. Ubiquitously expressed, with higher expression in lung.

The protein localises to the cytoplasm. In terms of biological role, in brain, may be required for corpus callosum development. The chain is Protein C10 (Grcc10) from Mus musculus (Mouse).